The sequence spans 226 residues: Probable proteasome subunit beta type-7 (226 aa).

The protein belongs to the peptidase T1B family. In terms of assembly, the 26S proteasome consists of a 20S proteasome core and two 19S regulatory subunits. The 20S proteasome core is composed of 28 subunits that are arranged in four stacked rings, resulting in a barrel-shaped structure. The two end rings are each formed by seven alpha subunits, and the two central rings are each formed by seven beta subunits. The catalytic chamber with the active sites is on the inside of the barrel.

It localises to the cytoplasm. It is found in the nucleus. Non-catalytic component of the proteasome which degrades poly-ubiquitinated proteins in the cytoplasm and in the nucleus. It is essential for the regulated turnover of proteins and for the removal of misfolded proteins. The proteasome is a multicatalytic proteinase complex that is characterized by its ability to cleave peptides with Arg, Phe, Tyr, Leu, and Glu adjacent to the leaving group at neutral or slightly basic pH. It has an ATP-dependent proteolytic activity. The chain is Probable proteasome subunit beta type-7 (PRE4) from Encephalitozoon cuniculi (strain GB-M1) (Microsporidian parasite).